The chain runs to 382 residues: Alanine racemase (382 aa).

The active-site Proton acceptor; specific for D-alanine is Lys39. Lys39 is subject to N6-(pyridoxal phosphate)lysine. Arg138 provides a ligand contact to substrate. The active-site Proton acceptor; specific for L-alanine is the Tyr265. Met312 contributes to the substrate binding site.

This sequence belongs to the alanine racemase family. Pyridoxal 5'-phosphate serves as cofactor.

It catalyses the reaction L-alanine = D-alanine. It functions in the pathway amino-acid biosynthesis; D-alanine biosynthesis; D-alanine from L-alanine: step 1/1. In terms of biological role, catalyzes the interconversion of L-alanine and D-alanine. May also act on other amino acids. The polypeptide is Alanine racemase (alr) (Staphylococcus saprophyticus subsp. saprophyticus (strain ATCC 15305 / DSM 20229 / NCIMB 8711 / NCTC 7292 / S-41)).